A 248-amino-acid polypeptide reads, in one-letter code: 3-deoxy-manno-octulosonate cytidylyltransferase (248 aa).

This sequence belongs to the KdsB family.

Its subcellular location is the cytoplasm. It catalyses the reaction 3-deoxy-alpha-D-manno-oct-2-ulosonate + CTP = CMP-3-deoxy-beta-D-manno-octulosonate + diphosphate. It participates in nucleotide-sugar biosynthesis; CMP-3-deoxy-D-manno-octulosonate biosynthesis; CMP-3-deoxy-D-manno-octulosonate from 3-deoxy-D-manno-octulosonate and CTP: step 1/1. Its pathway is bacterial outer membrane biogenesis; lipopolysaccharide biosynthesis. In terms of biological role, activates KDO (a required 8-carbon sugar) for incorporation into bacterial lipopolysaccharide in Gram-negative bacteria. The chain is 3-deoxy-manno-octulosonate cytidylyltransferase from Escherichia coli (strain K12 / MC4100 / BW2952).